The primary structure comprises 281 residues: MAQITMSDMLKAGLHFGHQTRRWNPKMKQFILTQRNGIHIINLFKSLDMIDKAYDFIKTTVAHNGTVLFVGTKKQAQEAIANQATRVNMPYVSERWLGGMLTNFQTVSKRVNRLKELEEMDFTDVHGSGLTKKELLLLEREKDKLNKQLGGIRNMNRTPSAMFVVDITKETLAVEEAHKLGIPVVAIVDTNADPDTVEYPIPANDDAIRGIELLTSLMADAVAEGLLERSGANKTEGEAAEQPMAAWEKELLTNEAPAEASAEAAAPAAAEGETAEAPKAE.

Positions 229 to 281 are disordered; that stretch reads RSGANKTEGEAAEQPMAAWEKELLTNEAPAEASAEAAAPAAAEGETAEAPKAE. The span at 255-275 shows a compositional bias: low complexity; sequence EAPAEASAEAAAPAAAEGETA.

The protein belongs to the universal ribosomal protein uS2 family.

The protein is Small ribosomal subunit protein uS2 of Bifidobacterium longum subsp. infantis (strain ATCC 15697 / DSM 20088 / JCM 1222 / NCTC 11817 / S12).